Reading from the N-terminus, the 301-residue chain is Glycine--tRNA ligase alpha subunit (301 aa).

The protein belongs to the class-II aminoacyl-tRNA synthetase family. In terms of assembly, tetramer of two alpha and two beta subunits.

It is found in the cytoplasm. It carries out the reaction tRNA(Gly) + glycine + ATP = glycyl-tRNA(Gly) + AMP + diphosphate. The chain is Glycine--tRNA ligase alpha subunit from Proteus mirabilis (strain HI4320).